The following is a 117-amino-acid chain: LYR motif-containing protein 1 (117 aa).

The protein belongs to the complex I LYR family.

This is LYR motif-containing protein 1 (lyrm1) from Dictyostelium discoideum (Social amoeba).